Consider the following 240-residue polypeptide: MRLGVNIDHVATIREARKTFEPSVLEAAFIAKRAGAHQITMHLREDRRHIKDEDVRLVRTSVEIPLNLEMAPTQEIKTIALEIKPQRVTLVPEKRQEVTTEGGLDILSNADYLKNYIKDFKENQIEVSFFIDPDLGQVEASKFTGADAIELHTGRFAESFHKRDFRLLEEEKNRLRKAATLARELGLNVYAGHGITYQNIHLILDLKGLIEELNIGHSIISNAVLFGLEKAITKMLGIIS.

Asn-6 is a binding site for 3-amino-2-oxopropyl phosphate. 8-9 (DH) is a binding site for 1-deoxy-D-xylulose 5-phosphate. Position 17 (Arg-17) interacts with 3-amino-2-oxopropyl phosphate. The active-site Proton acceptor is the His-42. Residues Arg-44 and His-49 each coordinate 1-deoxy-D-xylulose 5-phosphate. Glu-69 functions as the Proton acceptor in the catalytic mechanism. 1-deoxy-D-xylulose 5-phosphate is bound at residue Thr-99. The active-site Proton donor is the His-193. 3-amino-2-oxopropyl phosphate is bound by residues Gly-194 and 216-217 (GH).

The protein belongs to the PNP synthase family. As to quaternary structure, homooctamer; tetramer of dimers.

It localises to the cytoplasm. It carries out the reaction 3-amino-2-oxopropyl phosphate + 1-deoxy-D-xylulose 5-phosphate = pyridoxine 5'-phosphate + phosphate + 2 H2O + H(+). It participates in cofactor biosynthesis; pyridoxine 5'-phosphate biosynthesis; pyridoxine 5'-phosphate from D-erythrose 4-phosphate: step 5/5. In terms of biological role, catalyzes the complicated ring closure reaction between the two acyclic compounds 1-deoxy-D-xylulose-5-phosphate (DXP) and 3-amino-2-oxopropyl phosphate (1-amino-acetone-3-phosphate or AAP) to form pyridoxine 5'-phosphate (PNP) and inorganic phosphate. The chain is Pyridoxine 5'-phosphate synthase from Hydrogenobaculum sp. (strain Y04AAS1).